The chain runs to 470 residues: D-serine/D-alanine/glycine transporter (470 aa).

Helical transmembrane passes span L30 to S50, L51 to M71, F102 to I122, F128 to V148, F162 to M182, L211 to V231, I256 to V276, F283 to V303, F350 to G370, A371 to L391, P413 to L433, and Q441 to G461.

This sequence belongs to the amino acid-polyamine-organocation (APC) superfamily. Amino acid transporter (AAT) (TC 2.A.3.1) family.

It localises to the cell inner membrane. The enzyme catalyses D-alanine(in) + H(+)(in) = D-alanine(out) + H(+)(out). The catalysed reaction is D-serine(out) + H(+)(out) = D-serine(in) + H(+)(in). It catalyses the reaction glycine(in) + H(+)(in) = glycine(out) + H(+)(out). It carries out the reaction D-cycloserine(in) + H(+)(in) = D-cycloserine(out) + H(+)(out). Uptake of D-serine is inhibited by D-alanine, D-cycloserine, glycine and at high concentrations of D-threonine. Functionally, permease that is involved in the transport across the cytoplasmic membrane of D-alanine, D-serine and glycine. Is the only transporter of D-alanine. Transports D-serine less efficiently than DsdX. In addition, in minimal media, transports the broad spectrum antibiotic D-cycloserine into the cell. Transports D-cycloserine only in minimal media, and not in a complex medium, suggesting that CycA does not play a role in D-cycloserine transport when E.coli is grown in a complex or biologically relevant medium, probably due to competition from other CycA substrates present in the medium. The polypeptide is D-serine/D-alanine/glycine transporter (cycA) (Escherichia coli O6:H1 (strain CFT073 / ATCC 700928 / UPEC)).